Consider the following 1066-residue polypeptide: Carbamoyl phosphate synthase large chain (1066 aa).

The tract at residues 1 to 401 is carboxyphosphate synthetic domain; the sequence is MPKNNNIKKV…ALMKAVRSLE (401 aa). Positions 129, 169, 175, 176, 208, 210, 215, 241, 242, 243, 284, and 298 each coordinate ATP. One can recognise an ATP-grasp 1 domain in the interval 133–327; that stretch reads KNTMEKIGEP…IAKVAAKIAL (195 aa). The Mg(2+) site is built by Gln-284, Glu-298, and Asn-300. Mn(2+)-binding residues include Gln-284, Glu-298, and Asn-300. The oligomerization domain stretch occupies residues 402–547; sequence QNIYSMNYGD…YSCFDSENEV (146 aa). The interval 548–931 is carbamoyl phosphate synthetic domain; the sequence is DATKTKKKVL…ALYKAFLGAG (384 aa). The 191-residue stretch at 673–863 folds into the ATP-grasp 2 domain; it reads DEILEKCCIP…IVSLASKAVL (191 aa). Residues Arg-709, Lys-748, Leu-750, Glu-754, Gly-779, Ile-780, His-781, Ser-782, Gln-822, and Glu-834 each contribute to the ATP site. Positions 822, 834, and 836 each coordinate Mg(2+). The Mn(2+) site is built by Gln-822, Glu-834, and Asn-836. The MGS-like domain maps to 932-1066; that stretch reads INLPKHKKMI…ELSLIDIARI (135 aa). Residues 932–1066 are allosteric domain; sequence INLPKHKKMI…ELSLIDIARI (135 aa).

The protein belongs to the CarB family. In terms of assembly, composed of two chains; the small (or glutamine) chain promotes the hydrolysis of glutamine to ammonia, which is used by the large (or ammonia) chain to synthesize carbamoyl phosphate. Tetramer of heterodimers (alpha,beta)4. Mg(2+) is required as a cofactor. It depends on Mn(2+) as a cofactor.

The enzyme catalyses hydrogencarbonate + L-glutamine + 2 ATP + H2O = carbamoyl phosphate + L-glutamate + 2 ADP + phosphate + 2 H(+). It carries out the reaction hydrogencarbonate + NH4(+) + 2 ATP = carbamoyl phosphate + 2 ADP + phosphate + 2 H(+). Its pathway is amino-acid biosynthesis; L-arginine biosynthesis; carbamoyl phosphate from bicarbonate: step 1/1. It functions in the pathway pyrimidine metabolism; UMP biosynthesis via de novo pathway; (S)-dihydroorotate from bicarbonate: step 1/3. In terms of biological role, large subunit of the glutamine-dependent carbamoyl phosphate synthetase (CPSase). CPSase catalyzes the formation of carbamoyl phosphate from the ammonia moiety of glutamine, carbonate, and phosphate donated by ATP, constituting the first step of 2 biosynthetic pathways, one leading to arginine and/or urea and the other to pyrimidine nucleotides. The large subunit (synthetase) binds the substrates ammonia (free or transferred from glutamine from the small subunit), hydrogencarbonate and ATP and carries out an ATP-coupled ligase reaction, activating hydrogencarbonate by forming carboxy phosphate which reacts with ammonia to form carbamoyl phosphate. In Lachnoclostridium phytofermentans (strain ATCC 700394 / DSM 18823 / ISDg) (Clostridium phytofermentans), this protein is Carbamoyl phosphate synthase large chain.